The primary structure comprises 117 residues: Large ribosomal subunit protein uL18 (117 aa).

It belongs to the universal ribosomal protein uL18 family. In terms of assembly, part of the 50S ribosomal subunit; part of the 5S rRNA/L5/L18/L25 subcomplex. Contacts the 5S and 23S rRNAs.

Its function is as follows. This is one of the proteins that bind and probably mediate the attachment of the 5S RNA into the large ribosomal subunit, where it forms part of the central protuberance. In Yersinia pseudotuberculosis serotype O:1b (strain IP 31758), this protein is Large ribosomal subunit protein uL18.